The sequence spans 208 residues: Heart- and neural crest derivatives-expressed protein 2 (208 aa).

Disordered regions lie at residues 79 to 106 (AGAVGMGPRTVKRRPTANRKERRRTQSI) and 161 to 197 (EFKKTDAKEERRKKEMNDVLKSSGSSNDKKTKGRTGW). The span at 88–103 (TVKRRPTANRKERRRT) shows a compositional bias: basic residues. One can recognise a bHLH domain in the interval 90-142 (KRRPTANRKERRRTQSINSAFAELRECIPNVPADTKLSKIKTLRLATSYIAYL). Over residues 161-178 (EFKKTDAKEERRKKEMND) the composition is skewed to basic and acidic residues.

Efficient DNA binding requires dimerization with another bHLH protein.

It is found in the nucleus. Its function is as follows. Essential for myocardial and pectoral fin differentiation, patterning and morphogenesis. This is Heart- and neural crest derivatives-expressed protein 2 (hand2) from Danio rerio (Zebrafish).